Consider the following 338-residue polypeptide: Hydroxyproline O-galactosyltransferase HPGT1 (338 aa).

Topologically, residues Met1–Ser12 are cytoplasmic. Residues Ser13–Ala32 form a helical; Signal-anchor for type II membrane protein membrane-spanning segment. The Lumenal portion of the chain corresponds to Gly33–Val338.

This sequence belongs to the glycosyltransferase 31 family. It depends on Mn(2+) as a cofactor. As to expression, expressed in roots, rosette leaves, cauline leaves, stems, flowers and siliques.

Its subcellular location is the golgi apparatus membrane. Its pathway is protein modification; protein glycosylation. In terms of biological role, possesses hydroxyproline O-galactosyltransferase activity. Transfers galactose from UDP-galactose to hydroxyproline residues in the arabinogalactan proteins (AGPs). Is specific for AGPs containing non-contiguous peptidyl hydroxyproline residues. The addition of galactose onto the peptidyl hydroxyproline residues in AGP core proteins represents the first committed step in arabinogalactan polysaccharide addition. AGP glycans play essential roles in both vegetative and reproductive plant growth. The polypeptide is Hydroxyproline O-galactosyltransferase HPGT1 (Arabidopsis thaliana (Mouse-ear cress)).